The chain runs to 92 residues: Small ribosomal subunit protein uS19c (92 aa).

The protein belongs to the universal ribosomal protein uS19 family.

It localises to the plastid. It is found in the chloroplast. Its function is as follows. Protein S19 forms a complex with S13 that binds strongly to the 16S ribosomal RNA. This chain is Small ribosomal subunit protein uS19c, found in Vitis vinifera (Grape).